A 618-amino-acid chain; its full sequence is DNA mismatch repair protein MutL (618 aa).

Over residues 366–381 the composition is skewed to low complexity; it reads AEPTAAREPATPRYSG. Residues 366 to 405 form a disordered region; the sequence is AEPTAAREPATPRYSGGTSGGNGGRQSAGGWPHAQPGYQK. Over residues 382-392 the composition is skewed to gly residues; sequence GTSGGNGGRQS.

It belongs to the DNA mismatch repair MutL/HexB family.

Functionally, this protein is involved in the repair of mismatches in DNA. It is required for dam-dependent methyl-directed DNA mismatch repair. May act as a 'molecular matchmaker', a protein that promotes the formation of a stable complex between two or more DNA-binding proteins in an ATP-dependent manner without itself being part of a final effector complex. This Salmonella agona (strain SL483) protein is DNA mismatch repair protein MutL.